The primary structure comprises 171 residues: Shikimate kinase (171 aa).

14 to 19 contacts ATP; sequence GAGKST. Ser18 contacts Mg(2+). Asp36, Arg60, and Gly82 together coordinate substrate. Arg120 is a binding site for ATP. Arg139 lines the substrate pocket. Residue Gln156 participates in ATP binding.

It belongs to the shikimate kinase family. As to quaternary structure, monomer. Mg(2+) is required as a cofactor.

The protein localises to the cytoplasm. The enzyme catalyses shikimate + ATP = 3-phosphoshikimate + ADP + H(+). The protein operates within metabolic intermediate biosynthesis; chorismate biosynthesis; chorismate from D-erythrose 4-phosphate and phosphoenolpyruvate: step 5/7. In terms of biological role, catalyzes the specific phosphorylation of the 3-hydroxyl group of shikimic acid using ATP as a cosubstrate. This chain is Shikimate kinase, found in Shewanella oneidensis (strain ATCC 700550 / JCM 31522 / CIP 106686 / LMG 19005 / NCIMB 14063 / MR-1).